The primary structure comprises 301 residues: Probable protein phosphatase 2C 4 (301 aa).

Over residues 1–18 the composition is skewed to polar residues; it reads MGPYLSQPNKNKTTTSGE. Residues 1–20 form a disordered region; sequence MGPYLSQPNKNKTTTSGEGK. Residues 23–298 enclose the PPM-type phosphatase domain; that stretch reads IFAASEMQGW…DNMTTLIIYL (276 aa). 4 residues coordinate Mn(2+): Asp-57, Gly-58, Asp-237, and Asp-289.

This sequence belongs to the PP2C family. The cofactor is Mg(2+). Requires Mn(2+) as cofactor.

The protein localises to the membrane. It catalyses the reaction O-phospho-L-seryl-[protein] + H2O = L-seryl-[protein] + phosphate. The catalysed reaction is O-phospho-L-threonyl-[protein] + H2O = L-threonyl-[protein] + phosphate. Its function is as follows. Enzyme with a broad specificity. The sequence is that of Probable protein phosphatase 2C 4 from Paramecium tetraurelia.